Consider the following 76-residue polypeptide: Omega-conotoxin-like TxO3 (76 aa).

Residues 1-22 (MKLTCVVIVAVLFLTAWTFVTA) form the signal peptide. Residues 23–52 (VPHSSNALENLYLKAHHEMNNPEASELNKR) constitute a propeptide that is removed on maturation. Cystine bridges form between Cys53-Cys67, Cys60-Cys71, and Cys66-Cys75.

This sequence belongs to the conotoxin O1 superfamily. In terms of tissue distribution, expressed by the venom duct.

It localises to the secreted. Omega-conotoxins act at presynaptic membranes, they bind and block voltage-gated calcium channels (Cav). This chain is Omega-conotoxin-like TxO3 (TXO3), found in Conus textile (Cloth-of-gold cone).